Here is a 990-residue protein sequence, read N- to C-terminus: Aconitate hydratase 3, mitochondrial (990 aa).

The transit peptide at 1–78 (MYLTASSSAS…PFRFTSQIRA (78 aa)) directs the protein to the mitochondrion. The residue at position 91 (S91) is a Phosphoserine. Residues Q182 and 301 to 303 (DSH) contribute to the substrate site. C533, C599, and C602 together coordinate [4Fe-4S] cluster. Substrate contacts are provided by residues R632, R637, R795, and 876 to 877 (SR).

The protein belongs to the aconitase/IPM isomerase family. In terms of assembly, monomer. Interacts with B'GAMMA in the cytosol. The cofactor is [4Fe-4S] cluster. In terms of processing, phosphorylated at Ser-91 in the cytoplasm; this phosphorylation requires the presence of B'GAMMA. Major aconitase isoenzyme in young seedlings. Expressed in roots, leaves, stems and flowers, and, at low levels, in seeds.

Its subcellular location is the mitochondrion. It is found in the cytoplasm. It carries out the reaction citrate = D-threo-isocitrate. The protein operates within carbohydrate metabolism; tricarboxylic acid cycle; isocitrate from oxaloacetate: step 2/2. Catalyzes the isomerization of citrate to isocitrate via cis-aconitate. Contributes to oxidative stress tolerance. Modulates cytosolic citrate metabolism during lipid mobilization. Required during seedling growth. This chain is Aconitate hydratase 3, mitochondrial, found in Arabidopsis thaliana (Mouse-ear cress).